The chain runs to 101 residues: UPF0125 protein VC_0850 (101 aa).

The protein belongs to the UPF0125 (RnfH) family.

The polypeptide is UPF0125 protein VC_0850 (Vibrio cholerae serotype O1 (strain ATCC 39315 / El Tor Inaba N16961)).